Consider the following 40-residue polypeptide: Potassium channel toxin alpha-KTx 12.2 (40 aa).

4 disulfide bridges follow: Cys-2/Cys-5, Cys-10/Cys-31, Cys-16/Cys-36, and Cys-20/Cys-38.

The protein belongs to the short scorpion toxin superfamily. Potassium channel inhibitor family. Alpha-KTx 12 subfamily. Expressed by the venom gland.

It localises to the secreted. Its function is as follows. Inhibits high conductance calcium-activated potassium channels. Reversibly inhibits Shaker B potassium channels. This is Potassium channel toxin alpha-KTx 12.2 from Tityus trivittatus (Argentinean scorpion).